A 46-amino-acid polypeptide reads, in one-letter code: Defensin-1 (46 aa).

4 disulfide bridges follow: Cys-3–Cys-46, Cys-14–Cys-35, Cys-20–Cys-40, and Cys-24–Cys-42.

This sequence belongs to the DEFL family. Epidermis and vascular bundles of pods, stems, roots, leaves and wet or dry seeds.

Functionally, possesses antifungal activity sensitive to inorganic cations. The polypeptide is Defensin-1 (Pisum sativum (Garden pea)).